The chain runs to 78 residues: MLKLRLKRTGRKRSPSYRLVVMENTARRDGRPIEELGYYSPITKQYKFDVEKIKKWLDFGVKPTETVSSLLRKAEIIS.

This sequence belongs to the bacterial ribosomal protein bS16 family.

Its subcellular location is the plastid. It is found in the chloroplast. This chain is Small ribosomal subunit protein bS16c, found in Phaeodactylum tricornutum (strain CCAP 1055/1).